Here is a 55-residue protein sequence, read N- to C-terminus: Conotoxin Cal22c (55 aa).

Residues 1-5 (GRPSA) constitute a propeptide that is removed on maturation.

Contains 4 disulfide bonds. As to expression, expressed by the venom duct.

The protein resides in the secreted. In terms of biological role, probable neurotoxin with unknown target. Possibly targets ion channels. The polypeptide is Conotoxin Cal22c (Californiconus californicus (California cone)).